The chain runs to 379 residues: Cytochrome b (379 aa).

4 helical membrane passes run 33 to 53, 77 to 98, 113 to 133, and 178 to 198; these read FGSL…FLAM, WILR…YIHV, WNIG…GYVL, and FFAF…VHLL. Residues H83 and H97 each coordinate heme b. Positions 182 and 196 each coordinate heme b. Residue H201 participates in a ubiquinone binding. 4 helical membrane passes run 226–246, 288–308, 320–340, and 347–367; these read IKDI…VLFS, LGGV…PVLH, LSQC…WIGG, and YVIX…XXXX.

The protein belongs to the cytochrome b family. The cytochrome bc1 complex contains 11 subunits: 3 respiratory subunits (MT-CYB, CYC1 and UQCRFS1), 2 core proteins (UQCRC1 and UQCRC2) and 6 low-molecular weight proteins (UQCRH/QCR6, UQCRB/QCR7, UQCRQ/QCR8, UQCR10/QCR9, UQCR11/QCR10 and a cleavage product of UQCRFS1). This cytochrome bc1 complex then forms a dimer. Heme b serves as cofactor.

It is found in the mitochondrion inner membrane. Its function is as follows. Component of the ubiquinol-cytochrome c reductase complex (complex III or cytochrome b-c1 complex) that is part of the mitochondrial respiratory chain. The b-c1 complex mediates electron transfer from ubiquinol to cytochrome c. Contributes to the generation of a proton gradient across the mitochondrial membrane that is then used for ATP synthesis. This chain is Cytochrome b (MT-CYB), found in Myotis goudotii (Malagasy mouse-eared bat).